A 740-amino-acid chain; its full sequence is Ethylene receptor 1 (740 aa).

Helical transmembrane passes span 23-43 (ISDF…IYFV), 53-73 (WVLV…LINL), and 95-115 (AAVS…LLSV). Positions 65 and 69 each coordinate Cu cation. A GAF domain is found at 158–307 (DRHTILKTTL…VVADQVAVAL (150 aa)). The 238-residue stretch at 350–587 (VMNHEMRTPM…TVTFVVKLGI (238 aa)) folds into the Histidine kinase domain. His353 carries the phosphohistidine; by autocatalysis modification. Residues 615 to 732 (KVLLMDENGI…KMRNVLSKLL (118 aa)) form the Response regulatory domain. Asp663 is subject to 4-aspartylphosphate.

It belongs to the ethylene receptor family. As to quaternary structure, homodimer; disulfide-linked. It depends on Cu cation as a cofactor. Post-translationally, activation probably requires a transfer of a phosphate group between a His in the transmitter domain and an Asp of the receiver domain.

The protein resides in the endoplasmic reticulum membrane. It carries out the reaction ATP + protein L-histidine = ADP + protein N-phospho-L-histidine.. Its function is as follows. May act early in the ethylene signal transduction pathway, possibly as an ethylene receptor, or as a regulator of the pathway. The chain is Ethylene receptor 1 (ETR1) from Pelargonium hortorum (Common geranium).